Reading from the N-terminus, the 94-residue chain is Co-chaperonin GroES (94 aa).

This sequence belongs to the GroES chaperonin family. Heptamer of 7 subunits arranged in a ring. Interacts with the chaperonin GroEL.

The protein resides in the cytoplasm. Its function is as follows. Together with the chaperonin GroEL, plays an essential role in assisting protein folding. The GroEL-GroES system forms a nano-cage that allows encapsulation of the non-native substrate proteins and provides a physical environment optimized to promote and accelerate protein folding. GroES binds to the apical surface of the GroEL ring, thereby capping the opening of the GroEL channel. This chain is Co-chaperonin GroES, found in Ehrlichia chaffeensis.